Here is a 186-residue protein sequence, read N- to C-terminus: ATP synthase subunit delta (186 aa).

Belongs to the ATPase delta chain family. As to quaternary structure, F-type ATPases have 2 components, F(1) - the catalytic core - and F(0) - the membrane proton channel. F(1) has five subunits: alpha(3), beta(3), gamma(1), delta(1), epsilon(1). CF(0) has four main subunits: a(1), b(1), b'(1) and c(10-14). The alpha and beta chains form an alternating ring which encloses part of the gamma chain. F(1) is attached to F(0) by a central stalk formed by the gamma and epsilon chains, while a peripheral stalk is formed by the delta, b and b' chains.

The protein resides in the cell inner membrane. Its function is as follows. F(1)F(0) ATP synthase produces ATP from ADP in the presence of a proton or sodium gradient. F-type ATPases consist of two structural domains, F(1) containing the extramembraneous catalytic core and F(0) containing the membrane proton channel, linked together by a central stalk and a peripheral stalk. During catalysis, ATP synthesis in the catalytic domain of F(1) is coupled via a rotary mechanism of the central stalk subunits to proton translocation. In terms of biological role, this protein is part of the stalk that links CF(0) to CF(1). It either transmits conformational changes from CF(0) to CF(1) or is implicated in proton conduction. The polypeptide is ATP synthase subunit delta (Bradyrhizobium sp. (strain BTAi1 / ATCC BAA-1182)).